We begin with the raw amino-acid sequence, 356 residues long: Butyrate kinase 2 (356 aa).

It belongs to the acetokinase family. In terms of assembly, homodimer.

The protein resides in the cytoplasm. It catalyses the reaction butanoate + ATP = butanoyl phosphate + ADP. It functions in the pathway lipid metabolism; butanoate metabolism. Catalyzes the conversion of butyryl-CoA through butyryl phosphate to butyrate. This is Butyrate kinase 2 (buk2) from Clostridium acetobutylicum (strain ATCC 824 / DSM 792 / JCM 1419 / IAM 19013 / LMG 5710 / NBRC 13948 / NRRL B-527 / VKM B-1787 / 2291 / W).